Consider the following 375-residue polypeptide: G-protein coupled estrogen receptor 1 (375 aa).

M1 bears the N-acetylmethionine mark. Over M1–S62 the chain is Extracellular. 2 N-linked (GlcNAc...) asparagine glycosylation sites follow: N32 and N44. The chain crosses the membrane as a helical span at residues C63–N84. The Cytoplasmic segment spans residues I85–L96. Residues Y97 to D120 form a helical membrane-spanning segment. At E121–F132 the chain is on the extracellular side. C130 and C207 are disulfide-bonded. A helical transmembrane segment spans residues M133–F153. At D154 to R175 the chain is on the cytoplasmic side. The helical transmembrane segment at L176–T194 threads the bilayer. At A195–T220 the chain is on the extracellular side. A helical membrane pass occupies residues L221–L236. Over I237–R259 the chain is Cytoplasmic. Residues M260–S280 form a helical membrane-spanning segment. Residues V281–G306 are Extracellular-facing. A helical membrane pass occupies residues H307–L327. At G328 to V375 the chain is on the cytoplasmic side.

The protein belongs to the G-protein coupled receptor 1 family. In terms of assembly, interacts with RAMP3; the interaction confers proper subcellular localization and function in cardioprotection. Interacts with KRT7 and KRT8. Interacts with EGFR; the interaction increases after agonist-induced stimulation in cancer-associated fibroblasts (CAF). Interacts with EGFR and ESR1. Interacts (via C-terminus tail motif) with DLG4 (via N-terminus tandem pair of PDZ domains); the interaction is direct and induces the increase of GPER1 protein levels residing at the plasma membrane surface in a estradiol-independent manner. Homodimer. Heterodimer; heterodimerizes with other G-protein-coupled receptor (GPCRs) like CRHR1, HTR1A and PAQR8. Ubiquitinated; ubiquitination occurs at the plasma membrane and leads to proteasome-mediated degradation. In terms of processing, N-glycosylated. Expressed in brain, heart, spleen, preadipocytes, mature adipocytes and primary hippocampal neurons. Expressed in neurons of the hippocampus, hypothalamic paraventricular nucleus (PVH), supraoptic nucleus (SON) and the median eminence. Expressed in the nucleus ambiguous (at protein level). Expressed in brain, pituitary gland, adrenal medulla, renal pelvis, ovary, endothelial cells, visceral fat tissues and islets of Langerhans.

It localises to the nucleus. The protein localises to the cytoplasm. Its subcellular location is the perinuclear region. The protein resides in the cytoskeleton. It is found in the cell membrane. It localises to the endoplasmic reticulum membrane. The protein localises to the golgi apparatus membrane. Its subcellular location is the cell projection. The protein resides in the dendrite. It is found in the cytoplasmic vesicle membrane. It localises to the early endosome. The protein localises to the recycling endosome. Its subcellular location is the golgi apparatus. The protein resides in the trans-Golgi network. It is found in the dendritic spine membrane. It localises to the axon. The protein localises to the postsynaptic density. Its subcellular location is the mitochondrion membrane. Its function is as follows. G-protein coupled estrogen receptor that binds to 17-beta-estradiol (E2) with high affinity, leading to rapid and transient activation of numerous intracellular signaling pathways. Stimulates cAMP production, calcium mobilization and tyrosine kinase Src inducing the release of heparin-bound epidermal growth factor (HB-EGF) and subsequent transactivation of the epidermal growth factor receptor (EGFR), activating downstream signaling pathways such as PI3K/Akt and ERK/MAPK. Mediates pleiotropic functions among others in the cardiovascular, endocrine, reproductive, immune and central nervous systems. Has a role in cardioprotection by reducing cardiac hypertrophy and perivascular fibrosis in a RAMP3-dependent manner. Regulates arterial blood pressure by stimulating vasodilation and reducing vascular smooth muscle and microvascular endothelial cell proliferation. Plays a role in blood glucose homeostasis contributing to the insulin secretion response by pancreatic beta cells. Triggers mitochondrial apoptosis during pachytene spermatocyte differentiation. Stimulates uterine epithelial cell proliferation. Enhances uterine contractility in response to oxytocin. Contributes to thymic atrophy by inducing apoptosis. Attenuates TNF-mediated endothelial expression of leukocyte adhesion molecules. Promotes neuritogenesis in developing hippocampal neurons. Plays a role in acute neuroprotection against NMDA-induced excitotoxic neuronal death. Increases firing activity and intracellular calcium oscillations in luteinizing hormone-releasing hormone (LHRH) neurons. Inhibits early osteoblast proliferation at growth plate during skeletal development. Inhibits mature adipocyte differentiation and lipid accumulation. Involved in the recruitment of beta-arrestin 2 ARRB2 at the plasma membrane in epithelial cells. Also functions as a receptor for aldosterone mediating rapid regulation of vascular contractibility through the PI3K/ERK signaling pathway. Involved in cancer progression regulation. Stimulates cancer-associated fibroblast (CAF) proliferation by a rapid genomic response through the EGFR/ERK transduction pathway. Associated with EGFR, may act as a transcription factor activating growth regulatory genes (c-fos, cyclin D1). Promotes integrin alpha-5/beta-1 and fibronectin (FN) matrix assembly in breast cancer cells. The sequence is that of G-protein coupled estrogen receptor 1 (Gper1) from Mus musculus (Mouse).